The chain runs to 114 residues: Putative small ubiquitin-related modifier 4 (114 aa).

Positions 1–20 (MSTTSRVGSNEVKMEGQKRK) are disordered. Residues 26–104 (THVTLKVKGQ…IDAMLCQQSG (79 aa)) enclose the Ubiquitin-like domain. Gly-104 is covalently cross-linked (Glycyl lysine isopeptide (Gly-Lys) (interchain with K-? in acceptor proteins)).

Belongs to the ubiquitin family. SUMO subfamily. Interacts with SAE2, SCE1, SIZ1 and MMS21 Covalently attached to a number of proteins.

Its subcellular location is the nucleus. It is found in the cytoplasm. Its function is as follows. Ubiquitin-like protein which can be covalently attached to target lysines as a monomer. Does not seem to be involved in protein degradation and may function as an antagonist of ubiquitin in the degradation process. The polypeptide is Putative small ubiquitin-related modifier 4 (SUMO4) (Arabidopsis thaliana (Mouse-ear cress)).